The chain runs to 410 residues: Glycylpeptide N-tetradecanoyltransferase (410 aa).

10 residues coordinate tetradecanoyl-CoA: Phe-30, Trp-31, Phe-162, Leu-163, Cys-164, Val-165, Ser-171, Arg-173, Leu-174, and Ala-175.

Belongs to the NMT family. As to quaternary structure, heterodimer composed of NMT and AK2; AK2 myristoylation stabilizes the complex.

Its subcellular location is the cytoplasm. The enzyme catalyses N-terminal glycyl-[protein] + tetradecanoyl-CoA = N-tetradecanoylglycyl-[protein] + CoA + H(+). Adds a myristoyl group to the N-terminal glycine residue of certain cellular proteins. Myristoylates adenylate kinase AK2. During the asexual blood stage, may myristoylate proteins such as ARO, CDPK1 and GAP45. Probably by mediating protein myristoylation, plays a role in the assembly of the inner membrane complex during the early stages of schizogony and in the formation of rhoptries in the late stages and thus merozoite egress. The protein is Glycylpeptide N-tetradecanoyltransferase of Plasmodium falciparum (isolate 3D7).